A 137-amino-acid chain; its full sequence is ATP synthase epsilon chain (137 aa).

The protein belongs to the ATPase epsilon chain family. F-type ATPases have 2 components, CF(1) - the catalytic core - and CF(0) - the membrane proton channel. CF(1) has five subunits: alpha(3), beta(3), gamma(1), delta(1), epsilon(1). CF(0) has three main subunits: a, b and c.

Its subcellular location is the cell inner membrane. Produces ATP from ADP in the presence of a proton gradient across the membrane. The chain is ATP synthase epsilon chain from Pseudoalteromonas atlantica (strain T6c / ATCC BAA-1087).